The following is a 392-amino-acid chain: Protein O-glucosyltransferase 1 (392 aa).

Residues 1 to 23 (MELGVSSQLWLWLLLLLLPPVPG) form the signal peptide. 4 disulfide bridges follow: C49–C56, C54–C357, C102–C108, and C263–C286. The N-linked (GlcNAc...) asparagine glycan is linked to N53. An interaction with the consensus sequence C-X-S-X-[PA]-C in peptide substrates region spans residues 103–107 (MFPSR). D133 (proton donor/acceptor) is an active-site residue. An interaction with the consensus sequence C-X-S-X-[PA]-C in peptide substrates region spans residues 172-178 (AVWPIYP). Position 177 (Y177) interacts with UDP-alpha-D-glucose. N-linked (GlcNAc...) asparagine glycosylation occurs at N204. UDP-alpha-D-glucose is bound by residues S212, R218, and 274–279 (VAASFR). The N-linked (GlcNAc...) asparagine glycan is linked to N373. A Prevents secretion from ER motif is present at residues 389–392 (KIEL).

Belongs to the glycosyltransferase 90 family.

The protein resides in the endoplasmic reticulum lumen. The catalysed reaction is L-seryl-[EGF-like domain protein] + UDP-alpha-D-xylose = 3-O-(beta-D-xylosyl)-L-seryl-[EGF-like domain protein] + UDP + H(+). The enzyme catalyses L-seryl-[EGF-like domain protein] + UDP-alpha-D-glucose = 3-O-(beta-D-glucosyl)-L-seryl-[EGF-like domain protein] + UDP + H(+). The protein operates within protein modification; protein glycosylation. Functionally, dual specificity glycosyltransferase that catalyzes the transfer of glucose and xylose from UDP-glucose and UDP-xylose, respectively, to a serine residue found in the consensus sequence of C-X-S-X-P-C. Specifically targets extracellular EGF repeats of protein such as CRB2, F7, F9 and NOTCH2. Acts as a positive regulator of Notch signaling by mediating O-glucosylation of Notch, leading to regulate muscle development. Notch glucosylation does not affect Notch ligand binding. Required during early development to promote gastrulation: acts by mediating O-glucosylation of CRB2, which is required for CRB2 localization to the cell membrane. The protein is Protein O-glucosyltransferase 1 (POGLUT1) of Bos taurus (Bovine).